Here is a 248-residue protein sequence, read N- to C-terminus: MSGGGVIRGPAGNNDCRIYVGNLPPDIRTKDIEDVFYKYGAIRDIDLKNRRGGPPFAFVEFEDPRDAEDAVYGRDGYDYDGYRLRVEFPRSGRGTGRGGGGGGGGGAPRGRYGPPSRRSENRVVVSGLPPSGSWQDLKDHMREAGDVCYADVYRDGTGVVEFVRKEDMTYAVRKLDNTKFRSHEGETAYIRVKVDGPRSPSYGRSRSRSRSRSRNRSRSNSRSRSYSPRRSRGSPRYSPRHSRSRSRT.

Ser2 is modified (N-acetylserine). Position 2 is a phosphoserine (Ser2). An RRM 1 domain is found at 16–91; that stretch reads CRIYVGNLPP…YRLRVEFPRS (76 aa). Lys30 participates in a covalent cross-link: Glycyl lysine isopeptide (Lys-Gly) (interchain with G-Cter in SUMO2). Lys38 is subject to N6-acetyllysine; alternate. Residue Lys38 forms a Glycyl lysine isopeptide (Lys-Gly) (interchain with G-Cter in SUMO2); alternate linkage. Residues 88 to 134 are disordered; sequence FPRSGRGTGRGGGGGGGGGAPRGRYGPPSRRSENRVVVSGLPPSGSW. Residues Arg93, Arg97, and Arg109 each carry the asymmetric dimethylarginine; alternate modification. Omega-N-methylarginine; alternate occurs at positions 93, 97, and 109. Positions 93 to 108 are enriched in gly residues; that stretch reads RGTGRGGGGGGGGGAP. Position 111 is an omega-N-methylarginine (Arg111). The region spanning 121–195 is the RRM 2 domain; it reads NRVVVSGLPP…ETAYIRVKVD (75 aa). Ser133 is modified (phosphoserine). The residue at position 179 (Lys179) is an N6-acetyllysine. A disordered region spans residues 191-248; that stretch reads RVKVDGPRSPSYGRSRSRSRSRSRNRSRSNSRSRSYSPRRSRGSPRYSPRHSRSRSRT. An interaction with SAFB1 region spans residues 198–247; the sequence is RSPSYGRSRSRSRSRSRNRSRSNSRSRSYSPRRSRGSPRYSPRHSRSRSR. Ser199 and Ser201 each carry phosphoserine. Tyr202 is modified (phosphotyrosine). Ser205, Ser207, Ser209, Ser231, Ser234, and Ser238 each carry phosphoserine. The span at 205 to 248 shows a compositional bias: basic residues; the sequence is SRSRSRSRSRNRSRSNSRSRSYSPRRSRGSPRYSPRHSRSRSRT.

This sequence belongs to the splicing factor SR family. As to quaternary structure, consists of two polypeptides of p32 and p33. Identified in the spliceosome C complex. Component of a ribonucleoprotein complex containing mRNAs and RNA-binding proteins including DDX5, HNRNPH2 and SRSF1 as well as splicing regulator ARVCF. In vitro, self-associates and binds SRSF2, SNRNP70 and U2AF1 but not U2AF2. Binds SREK1/SFRS12. Interacts with SAFB/SAFB1. Interacts with PSIP1/LEDGF. Interacts with RSRC1 (via Arg/Ser-rich domain). Interacts with ZRSR2/U2AF1-RS2. Interacts with CCDC55 (via C-terminus). Interacts with SRPK1 and a sliding docking interaction is essential for its sequential and processive phosphorylation by SRPK1. Interacts with NXF1. Interacts with CCNL1, CCNL2 and CDK11B. Interacts with RRP1B. Interacts (when phosphorylated in its RS domain) with TNPO3; promoting nuclear import. Interacts with ILDR1 (via C-terminus) and ILDR2. Phosphorylated by CLK1, CLK2, CLK3 and CLK4. Phosphorylated by SRPK1 at multiple serines in its RS domain via a directional (C-terminal to N-terminal) and a dual-track mechanism incorporating both processive phosphorylation (in which the kinase stays attached to the substrate after each round of phosphorylation) and distributive phosphorylation steps (in which the kinase and substrate dissociate after each phosphorylation event). The RS domain of SRSF1 binds to a docking groove in the large lobe of the kinase domain of SRPK1 and this induces certain structural changes in SRPK1 and/or RRM 2 domain of SRSF1, allowing RRM 2 to bind the kinase and initiate phosphorylation. The cycles continue for several phosphorylation steps in a processive manner (steps 1-8) until the last few phosphorylation steps (approximately steps 9-12). During that time, a mechanical stress induces the unfolding of the beta-4 motif in RRM 2, which then docks at the docking groove of SRPK1. This also signals RRM 2 to begin to dissociate, which facilitates SRSF1 dissociation after phosphorylation is completed. Post-translationally, asymmetrically dimethylated at arginines, probably by PRMT1, methylation promotes localization to nuclear speckles.

Its subcellular location is the cytoplasm. It is found in the nucleus speckle. Its function is as follows. Plays a role in preventing exon skipping, ensuring the accuracy of splicing and regulating alternative splicing. Interacts with other spliceosomal components, via the RS domains, to form a bridge between the 5'- and 3'-splice site binding components, U1 snRNP and U2AF. Can stimulate binding of U1 snRNP to a 5'-splice site-containing pre-mRNA. Binds to purine-rich RNA sequences, either the octamer, 5'-RGAAGAAC-3' (r=A or G) or the decamers, AGGACAGAGC/AGGACGAAGC. Binds preferentially to the 5'-CGAGGCG-3' motif in vitro. Three copies of the octamer constitute a powerful splicing enhancer in vitro, the ASF/SF2 splicing enhancer (ASE) which can specifically activate ASE-dependent splicing. May function as export adapter involved in mRNA nuclear export through the TAP/NXF1 pathway. The protein is Serine/arginine-rich splicing factor 1 (SRSF1) of Pongo abelii (Sumatran orangutan).